Consider the following 212-residue polypeptide: Large ribosomal subunit protein uL3 (212 aa).

Residues 127 to 153 (FRGGPATHGQSDRHRAPGSIGSGTTPG) form a disordered region.

Belongs to the universal ribosomal protein uL3 family. As to quaternary structure, part of the 50S ribosomal subunit. Forms a cluster with proteins L14 and L19.

Its function is as follows. One of the primary rRNA binding proteins, it binds directly near the 3'-end of the 23S rRNA, where it nucleates assembly of the 50S subunit. The chain is Large ribosomal subunit protein uL3 from Herpetosiphon aurantiacus (strain ATCC 23779 / DSM 785 / 114-95).